The following is a 229-amino-acid chain: Ras-related protein Rab-33B (229 aa).

GTP contacts are provided by N43, V44, G45, K46, T47, C48, T62, and T65. Mg(2+) is bound at residue T47. The Switch 1 signature appears at 56 to 68; it reads GRFPDRTEATIGV. Mg(2+)-binding residues include T65 and D88. The Switch 2 signature appears at 89–108; sequence TAGQERFRKSMVQHYYRNVH. Residues G91, N148, K149, D151, A179, and K180 each contribute to the GTP site. 2 S-geranylgeranyl cysteine lipidation sites follow: C227 and C229. C229 is modified (cysteine methyl ester).

This sequence belongs to the small GTPase superfamily. Rab family. In terms of assembly, interacts (GTP- and GDP-bound forms) with ATG16L1; the complex consists of a tetramer where two RAB33B molecules bind independently one molecule of the ATG16L1 homodimer; the interaction promotes ATG12-ATG5-ATG16L1 complex recruitment to phagophores. Interacts with ATG16L2; however interaction is approximately hundred times lower than for ATG16L1. Interacts with RIC1 (via C-terminus domain); the interaction is direct with a preference for RAB33B-GTP. Interacts with RGP1. It depends on Mg(2+) as a cofactor. In terms of processing, prenylated.

It is found in the golgi apparatus membrane. The protein resides in the golgi apparatus. It localises to the cis-Golgi network. Its subcellular location is the preautophagosomal structure membrane. It carries out the reaction GTP + H2O = GDP + phosphate + H(+). With respect to regulation, regulated by guanine nucleotide exchange factors (GEFs) which promote the exchange of bound GDP for free GTP. Regulated by GTPase activating proteins (GAPs) such as SGSM2 which increase the GTP hydrolysis activity. Inhibited by GDP dissociation inhibitors (GDIs). The small GTPases Rab are key regulators of intracellular membrane trafficking, from the formation of transport vesicles to their fusion with membranes. Rabs cycle between an inactive GDP-bound form and an active GTP-bound form that is able to recruit to membranes different sets of downstream effectors directly responsible for vesicle formation, movement, tethering and fusion. RAB33B acts, in coordination with RAB6A, to regulate intra-Golgi retrograde trafficking. Participates in autophagosome formation by recruiting the ATG12-ATG5-ATG16L1 complex to phagophores, probably in a nucleotide-independent manner. This Pongo abelii (Sumatran orangutan) protein is Ras-related protein Rab-33B (RAB33B).